The primary structure comprises 127 residues: MISLTALDLLDELLNDSSSNMIWLYEVYMLYKTYTSYFFMSSKSFVRGVKRYLIYFCYCANFIALFRVIFGTIFVYSPDGITPFMTDFVRWILIYLKGSINSLLYMASFTKQISLLRGWRTEHAELS.

Helical transmembrane passes span 20-42 (NMIWLYEVYMLYKTYTSYFFMSS), 54-76 (IYFCYCANFIALFRVIFGTIFVY), and 91-110 (WILIYLKGSINSLLYMASFT).

The protein localises to the membrane. It is found in the cytoplasm. This is an uncharacterized protein from Schizosaccharomyces pombe (strain 972 / ATCC 24843) (Fission yeast).